The chain runs to 490 residues: Cobyric acid synthase (490 aa).

Residues 250–432 enclose the GATase cobBQ-type domain; the sequence is QLEIVVIRLP…LHGLLDNHAW (183 aa). Catalysis depends on Cys328, which acts as the Nucleophile. His424 is an active-site residue.

The protein belongs to the CobB/CobQ family. CobQ subfamily.

Its pathway is cofactor biosynthesis; adenosylcobalamin biosynthesis. Catalyzes amidations at positions B, D, E, and G on adenosylcobyrinic A,C-diamide. NH(2) groups are provided by glutamine, and one molecule of ATP is hydrogenolyzed for each amidation. The chain is Cobyric acid synthase from Gloeobacter violaceus (strain ATCC 29082 / PCC 7421).